Here is a 671-residue protein sequence, read N- to C-terminus: TBC1 domain family member 15 (671 aa).

Residue A2 is modified to N-acetylalanine. Residues S23, S32, S70, S205, and S257 each carry the phosphoserine modification. A Rab-GAP TBC domain is found at 329–539 (GLSHSLRKQA…RLWEVMWTEL (211 aa)). A phosphoserine mark is found at S623 and S655. Residues 650–671 (EAKDDSPTQTLASPNACRLTPA) are disordered. T669 is subject to Phosphothreonine.

In terms of assembly, interacts with non-phosphorylated form of RAB8A; phosphorylation of RAB8A at 'Thr-72' disrupts this interaction. Interacts with ARMC12. Ubiquitous, with highest expression in heart, liver and testis and lower expression in brain, spleen, lung, kidney and skeletal muscle.

The protein resides in the cytoplasm. Functionally, acts as a GTPase activating protein for RAB7A. Does not act on RAB4, RAB5 or RAB6. This chain is TBC1 domain family member 15 (Tbc1d15), found in Mus musculus (Mouse).